The chain runs to 148 residues: Lysozyme C (148 aa).

Residues 1–18 form the signal peptide; the sequence is MKALIILGLVLLSVTVQG. The region spanning 19–148 is the C-type lysozyme domain; it reads KIFERCELAR…VSQYVEGCGV (130 aa). Disulfide bonds link C24–C146, C48–C134, C83–C99, and C95–C113. Residues E53 and D71 contribute to the active site.

Belongs to the glycosyl hydrolase 22 family. In terms of assembly, monomer.

The catalysed reaction is Hydrolysis of (1-&gt;4)-beta-linkages between N-acetylmuramic acid and N-acetyl-D-glucosamine residues in a peptidoglycan and between N-acetyl-D-glucosamine residues in chitodextrins.. In terms of biological role, lysozymes have primarily a bacteriolytic function; those in tissues and body fluids are associated with the monocyte-macrophage system and enhance the activity of immunoagents. This chain is Lysozyme C (LYZ), found in Colobus angolensis (Angolan colobus).